The primary structure comprises 112 residues: Transcriptional regulator ClgR (112 aa).

Residues 13-67 (LRGARMSQGRTLREVSDSARVSLGYLSEIERGRKEPSSELLSAICTALQLPLSVV) form the HTH cro/C1-type domain. Residues 24–43 (LREVSDSARVSLGYLSEIER) constitute a DNA-binding region (H-T-H motif).

Its function is as follows. Key stress-response regulator that plays an important role in multiple regulatory networks in response to different stress conditions. Required to manage host-derived stress during infection. Plays a role during hypoxia and reaeration. Controls the expression of many genes involved in heat shock, virulence, lipid metabolism, transport or regulation, including clpP1, clpP2, clpC1, hsp, groES, otsA, pknD, prcA and prcB. May function by protecting intracellular redox potential and by inducing the expression of trehalose, a constituent of cell walls that is important for defense against cell-surface and oxidative stress. Also performs different functions during stress response and is important for the pathogenicity of M.tuberculosis in vivo, regardless of the induction of the Clp proteolytic pathway. May directly activate SigE and/or SigH. The protein is Transcriptional regulator ClgR (clgR) of Mycobacterium tuberculosis (strain CDC 1551 / Oshkosh).